The following is a 560-amino-acid chain: MAASNFMGSSARLRVGLLPSVTPRLSRRALATRASADSGGSGPVRVRFAPSPTGNLHVGGARTALFNYLFARSRGGKFVLRVEDTDLERSTKKSEEAVLTDLSWLGLDWDEGPDIGGDFGPYRQSERNALYKEHAQKLMESGAVYRCFCSNEELEKMKETANRMKIPPVYMGKWATASDAEVQQELEKGTPYTYRFRVPKEGSLKINDLIRGEVSWNLNTLGDFVIMRSNGQPVYNFCVTVDDATMRISHVIRAEEHLPNTLRQALIYKALGFAMPLFAHVSLILAPDKSKLSKRHGATSVGQYKEMGYLPQAMVNYLALLGWGDGTENEFFTIDDLVEKFTIDRVNKSGAVFDATKLKWMNGQHLRSLPSDLLIKDFEDQWRSTGILLESESGFAKEAAELLKEGIDLITDADAALCKLLSYPLHETLSSDEAKSVVEDKLSEVASGLISAYDSGELDQALAEGHDGWKKWVKSFGKTHKRKGKSLFMPLRVLLTGKLHGPAMDSTVILVHKAGTSGAVAPQSGFVSLDERFKILKEVNWESLQKQQESPVESAVPAAS.

47–49 (RFA) serves as a coordination point for L-glutamate. The 'HIGH' region signature appears at 50–60 (PSPTGNLHVGG). Histidine 57 contributes to the ATP binding site. L-glutamate is bound by residues glutamate 83, 235-239 (YNFCV), and arginine 253. Residues glutamate 256 and 291-295 (KLSKR) contribute to the ATP site. The 'KMSKS' region motif lies at 291-295 (KLSKR).

Belongs to the class-I aminoacyl-tRNA synthetase family. Glutamate--tRNA ligase type 1 subfamily.

The protein localises to the plastid. Its subcellular location is the chloroplast. It is found in the mitochondrion. It carries out the reaction tRNA(Glu) + L-glutamate + ATP = L-glutamyl-tRNA(Glu) + AMP + diphosphate. Functionally, catalyzes the attachment of glutamate to tRNA(Glu) in a two-step reaction: glutamate is first activated by ATP to form Glu-AMP and then transferred to the acceptor end of tRNA(Glu). This is Glutamate--tRNA ligase, chloroplastic/mitochondrial from Hordeum vulgare (Barley).